The primary structure comprises 154 residues: 3-dehydroquinate dehydratase (154 aa).

The active-site Proton acceptor is the Tyr-22. Residues Asn-73, His-79, and Asp-86 each coordinate substrate. His-99 (proton donor) is an active-site residue. Substrate is bound by residues 100-101 (LS) and Arg-110.

Belongs to the type-II 3-dehydroquinase family. In terms of assembly, homododecamer.

It carries out the reaction 3-dehydroquinate = 3-dehydroshikimate + H2O. It participates in metabolic intermediate biosynthesis; chorismate biosynthesis; chorismate from D-erythrose 4-phosphate and phosphoenolpyruvate: step 3/7. Functionally, catalyzes a trans-dehydration via an enolate intermediate. This Carboxydothermus hydrogenoformans (strain ATCC BAA-161 / DSM 6008 / Z-2901) protein is 3-dehydroquinate dehydratase.